A 156-amino-acid chain; its full sequence is Protein-export protein SecB (156 aa).

The protein belongs to the SecB family. As to quaternary structure, homotetramer, a dimer of dimers. One homotetramer interacts with 1 SecA dimer.

The protein localises to the cytoplasm. In terms of biological role, one of the proteins required for the normal export of preproteins out of the cell cytoplasm. It is a molecular chaperone that binds to a subset of precursor proteins, maintaining them in a translocation-competent state. It also specifically binds to its receptor SecA. The protein is Protein-export protein SecB of Serratia proteamaculans (strain 568).